The chain runs to 171 residues: Co-chaperone protein HscB (171 aa).

The region spanning 2 to 74 is the J domain; it reads DYFTLFGLPA…LTRAEYLLSL (73 aa).

It belongs to the HscB family. Interacts with HscA and stimulates its ATPase activity. Interacts with IscU.

Its function is as follows. Co-chaperone involved in the maturation of iron-sulfur cluster-containing proteins. Seems to help targeting proteins to be folded toward HscA. The chain is Co-chaperone protein HscB from Citrobacter koseri (strain ATCC BAA-895 / CDC 4225-83 / SGSC4696).